Consider the following 436-residue polypeptide: Nicotinate phosphoribosyltransferase (436 aa).

Residue His231 is modified to Phosphohistidine; by autocatalysis.

The protein belongs to the NAPRTase family. Post-translationally, transiently phosphorylated on a His residue during the reaction cycle. Phosphorylation strongly increases the affinity for substrates and increases the rate of nicotinate D-ribonucleotide production. Dephosphorylation regenerates the low-affinity form of the enzyme, leading to product release.

It catalyses the reaction nicotinate + 5-phospho-alpha-D-ribose 1-diphosphate + ATP + H2O = nicotinate beta-D-ribonucleotide + ADP + phosphate + diphosphate. It functions in the pathway cofactor biosynthesis; NAD(+) biosynthesis; nicotinate D-ribonucleotide from nicotinate: step 1/1. Functionally, catalyzes the synthesis of beta-nicotinate D-ribonucleotide from nicotinate and 5-phospho-D-ribose 1-phosphate at the expense of ATP. This chain is Nicotinate phosphoribosyltransferase, found in Vibrio campbellii (strain ATCC BAA-1116).